A 159-amino-acid chain; its full sequence is Phosphopantetheine adenylyltransferase (159 aa).

Ser-9 is a substrate binding site. ATP is bound by residues 9 to 10 (SF) and His-17. 3 residues coordinate substrate: Lys-41, Leu-73, and Lys-87. ATP contacts are provided by residues 88–90 (GLR), Glu-98, and 122–128 (YSFLSSS).

The protein belongs to the bacterial CoaD family. In terms of assembly, homohexamer. The cofactor is Mg(2+).

It is found in the cytoplasm. The enzyme catalyses (R)-4'-phosphopantetheine + ATP + H(+) = 3'-dephospho-CoA + diphosphate. It participates in cofactor biosynthesis; coenzyme A biosynthesis; CoA from (R)-pantothenate: step 4/5. In terms of biological role, reversibly transfers an adenylyl group from ATP to 4'-phosphopantetheine, yielding dephospho-CoA (dPCoA) and pyrophosphate. The chain is Phosphopantetheine adenylyltransferase from Streptomyces coelicolor (strain ATCC BAA-471 / A3(2) / M145).